Reading from the N-terminus, the 353-residue chain is COMPASS component SPP1 (353 aa).

The PHD-type zinc finger occupies 22-72 (DVYCICKRPDYGELMVGCDGCDDWFHFTCLHIPEQFKDLVFSFYCPYCQAG). Cys25, Cys27, Cys39, Cys42, His47, Cys50, Cys66, and Cys69 together coordinate Zn(2+). A non coventional C3H-type zinc finger region spans residues 83–124 (NGEGSLPKTLWKRKCRISDCYKPCLQDSKYCSEEHGREFVND). At Ser87 the chain carries Phosphoserine. Positions 97, 102, 113, and 117 each coordinate Zn(2+). Over residues 235 to 244 (VECGKEDSKG) the composition is skewed to basic and acidic residues. The segment at 235–255 (VECGKEDSKGTKRKKKKNSSR) is disordered. Basic residues predominate over residues 245–255 (TKRKKKKNSSR).

As to quaternary structure, component of the Set1C/COMPASS complex which consists of SET1(2), BRE2(2), SPP1(2), SDC1(1), SHG1(1), SWD1(1), SWD2(1), and SWD3(1).

It localises to the nucleus. Functionally, component of the Set1C/COMPASS complex that specifically mono-, di- and trimethylates histone H3 to form H3K4me1/2/3, which subsequently plays a role in telomere length maintenance and transcription elongation regulation. COMPASS recognizes ubiquitinated H2B on one face of the nucleosome which stimulates the methylation of H3 on the opposing face. SPP1/CPS40 can recognize methylated histone lysine residue H3K4me3 or unmethylated H3K4. Stimulates the RNA binding activity of SET1. The polypeptide is COMPASS component SPP1 (Saccharomyces cerevisiae (strain ATCC 204508 / S288c) (Baker's yeast)).